Consider the following 510-residue polypeptide: Cytochrome P450 705A20 (510 aa).

Residues 7 to 27 form a helical membrane-spanning segment; the sequence is QHCFSFILLCFFSLLCYSLLF.

This sequence belongs to the cytochrome P450 family. It depends on heme as a cofactor.

It is found in the membrane. In Arabidopsis thaliana (Mouse-ear cress), this protein is Cytochrome P450 705A20 (CYP705A20).